Here is a 213-residue protein sequence, read N- to C-terminus: Pyrrolidone-carboxylate peptidase (213 aa).

Residues glutamate 78, cysteine 141, and histidine 165 contribute to the active site.

This sequence belongs to the peptidase C15 family. Homotetramer.

The protein localises to the cytoplasm. It catalyses the reaction Release of an N-terminal pyroglutamyl group from a polypeptide, the second amino acid generally not being Pro.. Removes 5-oxoproline from various penultimate amino acid residues except L-proline. This is Pyrrolidone-carboxylate peptidase from Alkaliphilus oremlandii (strain OhILAs) (Clostridium oremlandii (strain OhILAs)).